The chain runs to 159 residues: Phosphopantetheine adenylyltransferase (159 aa).

Ser9 provides a ligand contact to substrate. ATP is bound by residues 9–10 (SF) and His17. Substrate-binding residues include Lys41, Leu73, and Lys87. ATP contacts are provided by residues 88–90 (GLR), Glu98, and 122–128 (YSFLSSS).

The protein belongs to the bacterial CoaD family. In terms of assembly, homohexamer. Mg(2+) serves as cofactor.

Its subcellular location is the cytoplasm. The enzyme catalyses (R)-4'-phosphopantetheine + ATP + H(+) = 3'-dephospho-CoA + diphosphate. Its pathway is cofactor biosynthesis; coenzyme A biosynthesis; CoA from (R)-pantothenate: step 4/5. Its function is as follows. Reversibly transfers an adenylyl group from ATP to 4'-phosphopantetheine, yielding dephospho-CoA (dPCoA) and pyrophosphate. The polypeptide is Phosphopantetheine adenylyltransferase (Streptomyces avermitilis (strain ATCC 31267 / DSM 46492 / JCM 5070 / NBRC 14893 / NCIMB 12804 / NRRL 8165 / MA-4680)).